Here is a 304-residue protein sequence, read N- to C-terminus: Meiotically up-regulated gene 86 protein (304 aa).

The segment covering Met-1–Ser-12 has biased composition (low complexity). The interval Met-1 to Phe-23 is disordered. Transmembrane regions (helical) follow at residues Pro-93–Val-113, Met-123–Glu-143, Phe-150–Ile-170, Ala-188–Val-208, Leu-212–Phe-232, and Val-247–Leu-267.

This sequence belongs to the acetate uptake transporter (AceTr) (TC 2.A.96) family.

The protein localises to the endoplasmic reticulum membrane. Its subcellular location is the golgi apparatus. It localises to the golgi stack membrane. It is found in the vacuole membrane. Has a role in meiosis. This chain is Meiotically up-regulated gene 86 protein (mug86), found in Schizosaccharomyces pombe (strain 972 / ATCC 24843) (Fission yeast).